We begin with the raw amino-acid sequence, 507 residues long: Tryptophan aminotransferase-related protein 2 (507 aa).

A disordered region spans residues Pro-91 to Val-135. Pyridoxal 5'-phosphate is bound by residues Tyr-169, Ser-211–Thr-212, Asn-282, Asp-304–Tyr-307, Thr-327–Lys-330, and Arg-338. N6-(pyridoxal phosphate)lysine is present on Lys-330.

Belongs to the alliinase family. Pyridoxal 5'-phosphate serves as cofactor. Widely expressed.

It carries out the reaction L-tryptophan + 2-oxoglutarate = indole-3-pyruvate + L-glutamate. The protein operates within plant hormone metabolism; auxin biosynthesis. In terms of biological role, probable tryptophan aminotransferase involved in auxin (IAA) biosynthesis. Required for auxin production to initiate multiple change in growth in response to environmental and developmental cues. Functions upstream of YUCCA1 in auxin biosynthesis. Required for polar auxin transport. The chain is Tryptophan aminotransferase-related protein 2 from Oryza sativa subsp. japonica (Rice).